We begin with the raw amino-acid sequence, 409 residues long: Multidrug resistance protein MdtG (409 aa).

A run of 10 helical transmembrane segments spans residues leucine 16–phenylalanine 36, isoleucine 58–alanine 78, leucine 92–isoleucine 112, alanine 115–valine 135, threonine 146–alanine 166, proline 173–isoleucine 193, leucine 224–leucine 244, valine 256–alanine 276, isoleucine 291–threonine 311, and alanine 379–leucine 399.

Belongs to the major facilitator superfamily. DHA1 family. MdtG (TC 2.A.1.2.20) subfamily.

Its subcellular location is the cell inner membrane. Confers resistance to fosfomycin and deoxycholate. The sequence is that of Multidrug resistance protein MdtG from Escherichia coli O9:H4 (strain HS).